The following is a 30-amino-acid chain: Methanobactin mb-OB3b (30 aa).

The propeptide occupies 1–19 (MTVKIAQKKVLPVIGRAAA). A cross-link (2-(3-methylbutanoyl)-5-hydroxyoxazole-4-carbothionic acid (Leu-Cys)) is located at residues 20 to 21 (LC). Residues C21 and C27 each coordinate Cu(2+). Residues C24 and C29 are joined by a disulfide bond. Residues 26 to 27 (PC) constitute a cross-link (proline 5-hydroxy-oxazole-4-carbothionic acid (Pro-Cys)).

Monomer. In the absence of copper, may exist as a dimer or an oligomer.

Its subcellular location is the secreted. It is found in the cytoplasm. It carries out the reaction 2 superoxide + 2 H(+) = H2O2 + O2. Functionally, chalkophore involved in scavenging, uptake and suppression of toxicity of copper. Each apo-methanobactin (apo-mb) complexes 1 Cu(2+) or Cu(1+) ion to form Cu(1+)-mb (Cu-mb) which is then taken up by the cell. Enhances growth rate in the presence of copper and reduces growth lag upon exposition to elevated levels of copper. Cu-mb contributes to the switchover from soluble methane monooxygenase (sMMO) to the membrane-bound particulate MMO (pMMO) by inducing transcription of pMMO subunit A. It also stimulates the enzymatic activity of pMMO. In the absence of copper, binds other metal ions, like Zn(2+), Ag(1+), Au(3+), Co(2+), Cd(2+), Fe(3+), Hg(2+), Mn(2+), Ni(2+), Pb(2+) or U(6+), but not Ba(2+), Ca(2+), La(2+), Mg(2+) or Sr(2+). Uptake is an active process, which may involve TonB-dependent transporters, and as such does not involve porins. Cu-Mb can be taken up by other methanotrophic bacteria but not by E.coli. Has Cu-dependent superoxide dismutase-like activity. Shows reductant-dependent oxidase and hydrogen peroxide reductase activities. Reduces copper-levels in liver in a rat model of Wilson disease. This Methylosinus trichosporium protein is Methanobactin mb-OB3b.